The primary structure comprises 431 residues: Homogentisate 1,2-dioxygenase (431 aa).

Histidine 286 (proton acceptor) is an active-site residue. Positions 329 and 335 each coordinate Fe cation. Homogentisate is bound by residues tyrosine 344 and histidine 365. Histidine 365 contacts Fe cation.

This sequence belongs to the homogentisate dioxygenase family. Hexamer; dimer of trimers. Fe cation is required as a cofactor.

It catalyses the reaction homogentisate + O2 = 4-maleylacetoacetate + H(+). It functions in the pathway amino-acid degradation; L-phenylalanine degradation; acetoacetate and fumarate from L-phenylalanine: step 4/6. In terms of biological role, involved in the catabolism of homogentisate (2,5-dihydroxyphenylacetate or 2,5-OH-PhAc), a central intermediate in the degradation of phenylalanine and tyrosine. Catalyzes the oxidative ring cleavage of the aromatic ring of homogentisate to yield maleylacetoacetate. The protein is Homogentisate 1,2-dioxygenase of Pseudomonas fluorescens (strain Pf0-1).